A 2698-amino-acid polypeptide reads, in one-letter code: Chromodomain-helicase-DNA-binding protein 6 (2698 aa).

3 stretches are compositionally biased toward basic and acidic residues: residues 1–12, 100–115, and 122–171; these read MKMKIQKKEKQL, EPGEQEGTKASKDREP, and EPKE…KRSC. Residues 1-243 are disordered; it reads MKMKIQKKEK…KRRSGRQVKR (243 aa). The tract at residues 1–746 is required for DNA-dependent ATPase activity; sequence MKMKIQKKEK…MMELRKCCNH (746 aa). Residues 213–224 are compositionally biased toward low complexity; sequence QSLPNPSLQSPE. Chromo domains follow at residues 291–342 and 374–438; these read NIIE…KDPR and IEID…KPVE. One can recognise a Helicase ATP-binding domain in the interval 472-646; it reads LFNWYNRKNC…FSLLNFLEPS (175 aa). Position 485 to 492 (485 to 492) interacts with ATP; it reads DEMGLGKT. Residues 597 to 600 carry the DEAH box motif; the sequence is DEAH. The Helicase C-terminal domain maps to 786–955; it reads LIDKLLPKLI…LSKMEVEDLL (170 aa). The tract at residues 1318 to 1370 is disordered; sequence SLSAEQGVTDGTSDIPERGNIDKEDSAEDKVDGLQKQTASPSDGSDGIFGEKK. The span at 1320–1329 shows a compositional bias: polar residues; the sequence is SAEQGVTDGT. The span at 1332-1350 shows a compositional bias: basic and acidic residues; it reads IPERGNIDKEDSAEDKVDG. Residues 1435 to 1489 enclose the Myb-like domain; sequence RWTRREQADFYRTVSSFGVVYDQEKEAFDWTQFRAISRLDKKSDENLEHYFHSFV. The span at 1707-1730 shows a compositional bias: polar residues; that stretch reads EPRSFQEAPSTNMQSRKKTVTVSA. A disordered region spans residues 1707–1731; the sequence is EPRSFQEAPSTNMQSRKKTVTVSAS. Serine 1852 carries the post-translational modification Phosphoserine. 6 disordered regions span residues 1935–2046, 2111–2137, 2308–2337, 2359–2387, 2538–2587, and 2626–2698; these read GLGS…ASGI, LPTPVLSSSAGSRSSLSEPEATEHSFS, TTLNTTHPEGPGAASSASEPTAAASSQAEK, PGFGASFSDKPKQRRPRCKEPGKLDIGSL, ASLA…PTIT, and QGRH…DDTN. Basic and acidic residues-rich tracts occupy residues 1943–1955, 1975–1991, and 2004–2024; these read GEKPKAYEPDPYR, FKLKHELLKEPWKESSE, and SEPKSEEMDFENKDDYEKDGA. 2 stretches are compositionally biased toward low complexity: residues 2117–2127 and 2315–2336; these read SSSAGSRSSLS and PEGPGAASSASEPTAAASSQAE. Low complexity predominate over residues 2538 to 2550; that stretch reads ASLASTKSGASAT. The segment covering 2552–2573 has biased composition (basic and acidic residues); sequence KTTEDELSGRDVKADSLVEDKP. Polar residues-rich tracts occupy residues 2578–2587 and 2664–2675; these read FSDQSEPTIT and SDQNCTESSVTV. The segment covering 2677–2698 has biased composition (basic and acidic residues); sequence PEREHVAQAREEGLKDSNDDTN.

The protein belongs to the SNF2/RAD54 helicase family. In terms of assembly, interacts with NFE2L2; involved in activation of the transcription. May interact with PPARA. Widely expressed.

The protein localises to the nucleus. It localises to the nucleoplasm. It catalyses the reaction ATP + H2O = ADP + phosphate + H(+). ATP-dependent chromatin-remodeling factor. Regulates transcription by disrupting nucleosomes in a largely non-sliding manner which strongly increases the accessibility of chromatin. Activates transcription of specific genes in response to oxidative stress through interaction with NFE2L2. The sequence is that of Chromodomain-helicase-DNA-binding protein 6 (Chd6) from Rattus norvegicus (Rat).